The primary structure comprises 289 residues: Tachykinins (289 aa).

The N-terminal stretch at 1-24 is a signal peptide; sequence MRSQGGSFAVALLLLLLLTAAATA. A propeptide spanning residues 25–49 is cleaved from the precursor; the sequence is ADAEPDVESSVSTLPPGADAPRRMV. Residues 28–80 are disordered; that stretch reads EPDVESSVSTLPPGADAPRRMVKRAPTSSFIGMRGKKEDEKDQRAADWMGPDP. An Arginine amide modification is found at R61. The span at 62 to 72 shows a compositional bias: basic and acidic residues; it reads GKKEDEKDQRA. Residue N95 is modified to Asparagine amide. An Arginine amide modification is found at R110. V155 is modified (valine amide). The tract at residues 156–175 is disordered; sequence GKRAPTGFTGMRGKRPMSGD. An arginine amide mark is found at R167, R198, R237, and R281. Positions 285–289 are excised as a propeptide; it reads PALAE.

This sequence belongs to the tachykinin family.

It localises to the secreted. Tachykinins are active peptides which excite neurons, evoke behavioral responses, are potent vasodilators and secretagogues, and contract (directly or indirectly) many smooth muscles. Stimulates gut muscle contractions. This Drosophila pseudoobscura pseudoobscura (Fruit fly) protein is Tachykinins.